A 393-amino-acid polypeptide reads, in one-letter code: Acetylornithine aminotransferase 1 (393 aa).

Residue arginine 131 participates in N(2)-acetyl-L-ornithine binding. Aspartate 215 to glutamine 218 lines the pyridoxal 5'-phosphate pocket. Residue lysine 244 is modified to N6-(pyridoxal phosphate)lysine. Threonine 272 is a binding site for N(2)-acetyl-L-ornithine. Pyridoxal 5'-phosphate is bound at residue threonine 273.

The protein belongs to the class-III pyridoxal-phosphate-dependent aminotransferase family. ArgD subfamily. In terms of assembly, homodimer. Requires pyridoxal 5'-phosphate as cofactor.

It is found in the cytoplasm. It catalyses the reaction N(2)-acetyl-L-ornithine + 2-oxoglutarate = N-acetyl-L-glutamate 5-semialdehyde + L-glutamate. The protein operates within amino-acid biosynthesis; L-arginine biosynthesis; N(2)-acetyl-L-ornithine from L-glutamate: step 4/4. This chain is Acetylornithine aminotransferase 1, found in Bordetella parapertussis (strain 12822 / ATCC BAA-587 / NCTC 13253).